Here is a 527-residue protein sequence, read N- to C-terminus: T-complex protein 1 subunit beta (527 aa).

It belongs to the TCP-1 chaperonin family. Heterooligomeric complex of about 850 to 900 kDa that forms two stacked rings, 12 to 16 nm in diameter.

Its subcellular location is the cytoplasm. In terms of biological role, molecular chaperone; assists the folding of proteins upon ATP hydrolysis. Known to play a role, in vitro, in the folding of actin and tubulin. The polypeptide is T-complex protein 1 subunit beta (Arabidopsis thaliana (Mouse-ear cress)).